The sequence spans 226 residues: Large ribosomal subunit protein uL1 (226 aa).

This sequence belongs to the universal ribosomal protein uL1 family. In terms of assembly, part of the 50S ribosomal subunit.

Its function is as follows. Binds directly to 23S rRNA. The L1 stalk is quite mobile in the ribosome, and is involved in E site tRNA release. Functionally, protein L1 is also a translational repressor protein, it controls the translation of the L11 operon by binding to its mRNA. The polypeptide is Large ribosomal subunit protein uL1 (Mycoplasma pneumoniae (strain ATCC 29342 / M129 / Subtype 1) (Mycoplasmoides pneumoniae)).